Reading from the N-terminus, the 156-residue chain is Transcription antitermination protein NusB (156 aa).

Belongs to the NusB family.

Its function is as follows. Involved in transcription antitermination. Required for transcription of ribosomal RNA (rRNA) genes. Binds specifically to the boxA antiterminator sequence of the ribosomal RNA (rrn) operons. In Mycolicibacterium paratuberculosis (strain ATCC BAA-968 / K-10) (Mycobacterium paratuberculosis), this protein is Transcription antitermination protein NusB.